A 153-amino-acid chain; its full sequence is 3-hydroxyacyl-[acyl-carrier-protein] dehydratase FabZ (153 aa).

The active site involves His54.

Belongs to the thioester dehydratase family. FabZ subfamily.

It is found in the cytoplasm. It catalyses the reaction a (3R)-hydroxyacyl-[ACP] = a (2E)-enoyl-[ACP] + H2O. Involved in unsaturated fatty acids biosynthesis. Catalyzes the dehydration of short chain beta-hydroxyacyl-ACPs and long chain saturated and unsaturated beta-hydroxyacyl-ACPs. The sequence is that of 3-hydroxyacyl-[acyl-carrier-protein] dehydratase FabZ from Shewanella amazonensis (strain ATCC BAA-1098 / SB2B).